We begin with the raw amino-acid sequence, 469 residues long: Phenolic glucoside malonyltransferase 1 (469 aa).

M1 is modified (N-acetylmethionine). The active-site Proton acceptor is H169. The short motif at 169–173 is the HXXXD motif element; that stretch reads HAVLD. A malonyl-CoA-binding site is contributed by 291-292; it reads ST. D413 serves as the catalytic Proton acceptor. Residues 413–417 carry the DFGWG motif motif; the sequence is DFGWG.

Belongs to the plant acyltransferase family. Phenolic glucoside malonyltransferase subfamily.

It catalyses the reaction a flavonol 3-O-beta-D-glucoside + malonyl-CoA = a flavonol 3-O-(6-O-malonyl-beta-D-glucoside) + CoA. The catalysed reaction is a flavonol 7-O-beta-D-glucoside + malonyl-CoA = a flavonol 7-O-(6-O-malonyl-beta-D-glucoside) + CoA. Its function is as follows. Malonyltransferase acting on xenobiotic glucosides. Has activity toward 2-Naphthol glucoside (2NAG), 1-Naphthol glucoside (1NAG), kaempferol 7-O-glucoside, kaempferol 3-O-glucoside, hydroxycoumarin glucosides, phenol-glucosides and isoflavone glucoside (daidzin), but not toward 4-coumaroyl glucoside, kaempferol 3,7-O-diglucoside, salicylic acid glucoside and phlorizin. In vivo, seems to be involved in the malonylation of 2-Naphthol glucoside while PMAT2 would be involved in the malonylation of 4-methylumbelliferone glucoside or 4-nitrophenyl glucoside. In Arabidopsis thaliana (Mouse-ear cress), this protein is Phenolic glucoside malonyltransferase 1 (PMAT1).